A 69-amino-acid chain; its full sequence is Putative membrane protein insertion efficiency factor (69 aa).

It belongs to the UPF0161 family.

The protein resides in the cell membrane. Could be involved in insertion of integral membrane proteins into the membrane. This is Putative membrane protein insertion efficiency factor from Thermoanaerobacter pseudethanolicus (strain ATCC 33223 / 39E) (Clostridium thermohydrosulfuricum).